The primary structure comprises 887 residues: Alanine--tRNA ligase (887 aa).

Residues histidine 581, histidine 585, cysteine 683, and histidine 687 each coordinate Zn(2+).

It belongs to the class-II aminoacyl-tRNA synthetase family. Requires Zn(2+) as cofactor.

The protein resides in the cytoplasm. It carries out the reaction tRNA(Ala) + L-alanine + ATP = L-alanyl-tRNA(Ala) + AMP + diphosphate. In terms of biological role, catalyzes the attachment of alanine to tRNA(Ala) in a two-step reaction: alanine is first activated by ATP to form Ala-AMP and then transferred to the acceptor end of tRNA(Ala). Also edits incorrectly charged Ser-tRNA(Ala) and Gly-tRNA(Ala) via its editing domain. In Ehrlichia ruminantium (strain Welgevonden), this protein is Alanine--tRNA ligase.